Reading from the N-terminus, the 2575-residue chain is Non-reducing polyketide synthase pks11 (2575 aa).

In terms of domain architecture, Starter acyltransferase (SAT) spans leucine 89–glycine 228. Cysteine 129 acts as the Nucleophile; for transacylase activity in catalysis. Histidine 247 (proton donor/acceptor; for transacylase activity) is an active-site residue. The 418-residue stretch at glutamate 373–glutamate 790 folds into the Ketosynthase family 3 (KS3) domain. Active-site for beta-ketoacyl synthase activity residues include cysteine 538, histidine 673, and histidine 713. One can recognise a Malonyl-CoA:ACP transacylase (MAT) domain in the interval phenylalanine 901–serine 1192. Residues proline 1276–asparagine 1409 form an N-terminal hotdog fold region. One can recognise a PKS/mFAS DH domain in the interval proline 1276–serine 1586. The interval leucine 1307–threonine 1584 is product template (PT) domain. Catalysis depends on histidine 1311, which acts as the Proton acceptor; for dehydratase activity. The C-terminal hotdog fold stretch occupies residues alanine 1437 to serine 1586. Residue aspartate 1493 is the Proton donor; for dehydratase activity of the active site. Residues threonine 1597–serine 1606 are compositionally biased toward polar residues. Residues threonine 1597 to glycine 1636 are disordered. A Carrier domain is found at glutamine 1637 to leucine 1711. Serine 1671 is subject to O-(pantetheine 4'-phosphoryl)serine. The segment at valine 1713–serine 1762 is disordered. Residues serine 1714–glycine 1724 show a composition bias toward acidic residues. The span at serine 1725–serine 1746 shows a compositional bias: low complexity. Positions glycine 1752–serine 1762 are enriched in basic and acidic residues. Residues leucine 1835 to proline 2130 form a methyltransferase domain region. The region spanning isoleucine 2204–alanine 2448 is the Thioester reductase (TE) domain.

Pantetheine 4'-phosphate is required as a cofactor.

Its pathway is secondary metabolite biosynthesis. Non-reducing polyketide synthase; part of the gene cluster that mediates the biosynthesis of mitorubrinol and mitorubrinic acid, two virulence factors that improve T.marneffei intracellular survival in macrophages. The two polyketide synthases pks12 and pks11 are probably responsible for sequential use in the biosynthesis of mitorubrinol and mitorubrinic acid. The first part of the biosynthesis is probably catalyzed by pks12, which synthesized orsellinic acid. This tetraketide is then used as a starter unit for pks11, which possesses a SAT domain, in the second part of the biosynthesis. Pks11, contains a methyltransferase domain, also served that methylates the products, using a methyl group from S-adenosylmethionine. This chain is Non-reducing polyketide synthase pks11, found in Talaromyces marneffei (Penicillium marneffei).